The primary structure comprises 406 residues: S-adenosylmethionine synthase (406 aa).

140 to 145 (GRGSVD) provides a ligand contact to ATP.

It belongs to the AdoMet synthase 2 family. Requires Mg(2+) as cofactor.

It catalyses the reaction L-methionine + ATP + H2O = S-adenosyl-L-methionine + phosphate + diphosphate. Its pathway is amino-acid biosynthesis; S-adenosyl-L-methionine biosynthesis; S-adenosyl-L-methionine from L-methionine: step 1/1. Its function is as follows. Catalyzes the formation of S-adenosylmethionine from methionine and ATP. This chain is S-adenosylmethionine synthase (mat), found in Aeropyrum pernix (strain ATCC 700893 / DSM 11879 / JCM 9820 / NBRC 100138 / K1).